A 471-amino-acid polypeptide reads, in one-letter code: Pneumolysin (471 aa).

The next 4 beta stranded transmembrane spans lie at 158–171 (MEQL…DFEK), 178–187 (IDFNSVHSGE), 256–265 (SDEVEAAFEA), and 273–285 (APQT…LDNT). Residues 427–437 (ECTGLAWEWWR) carry the Conserved undecapeptide motif. The Cholesterol binding signature appears at 459–460 (TL).

This sequence belongs to the cholesterol-dependent cytolysin family. Homooligomeric pore complex of 35 to 50 subunits; when inserted in the host membrane. Has a slightly altered apparent molecular weight in a secA2 deletion mutant, but no post-translational modifications have been found.

The protein localises to the secreted. The protein resides in the cell wall. It is found in the host cell membrane. Functionally, a cholesterol-dependent toxin that causes cytolysis by forming pores in cholesterol containing host membranes. After binding to target membranes, the protein undergoes a major conformation change, leading to its insertion in the host membrane and formation of an oligomeric pore complex. Cholesterol is required for binding to host membranes, membrane insertion and pore formation; cholesterol binding is mediated by a Thr-Leu pair in the C-terminus. Can be reversibly inactivated by oxidation. In Streptococcus pneumoniae serotype 4 (strain ATCC BAA-334 / TIGR4), this protein is Pneumolysin (ply).